The chain runs to 927 residues: MNSVRAANRRPRRVSRPRPVQQQQQQPPQQPPPQPPQQQPPQQQPPPPPQQQQQQQPPPPPPPPPPLPQERNNVGERDDDVPADMVAEESGPGAQNSPYQLRRKTLLPKRTACPTKNSMEGASTSTTENFGHRAKRARVSGKSQDLSAAPAEQYLQEKLPDEVVLKIFSYLLEQDLCRAACVCKRFSELANDPILWKRLYMEVFEYTRPMMHPEPGKFYQINPEEYEHPNPWKESFQQLYKGAHVKPGFAEHFYSNPARYKGRENMLYYDTIEDALGGVQEAHFDGLIFVHSGIYTDEWIYIESPITMIGAAPGKVADKVIIENTRDSTFVFMEGSEDAYVGYMTIRFNPDDKSAQHHNAHHCLEITVNCSPIIDHCIIRSTCTVGSAVCVSGQGACPTIKHCNISDCENVGLYITDHAQGIYEDNEISNNALAGIWVKNHGNPIIRRNHIHHGRDVGVFTFDHGMGYFESCNIHRNRIAGFEVKAYANPTVVRCEIHHGQTGGIYVHEKGRGQFIENKIYANNFAGVWITSNSDPTIRGNSIFNGNQGGVYIFGDGRGLIEGNDIYGNALAGIQIRTNSCPIVRHNKIHDGQHGGIYVHEKGQGVIEENEVYSNTLAGVWVTTGSTPVLRRNRIHSGKQVGVYFYDNGHGVLEDNDIYNHMYSGVQIRTGSNPKIRRNKIWGGQNGGILVYNSGLGCIEDNEIFDNAMAGVWIKTDSNPTLRRNKIHDGRDGGICIFNGGRGLLEENDIFRNAQAGVLISTNSHPILRKNRIFDGFAAGIEITNHATATLEGNQIFNNRFGGLFLASGVNVTMKDNKIMNNQDAIEKAVSRGQCLYKISSYTSYPMHDFYRCHTCNTTDRNAICVNCIKKCHQGHDVEFIRHDRFFCDCGAGTLSNPCTLAGEPTHDTDTLYDSAPPIESNTLQHN.

The disordered stretch occupies residues 1-132 (MNSVRAANRR…STSTTENFGH (132 aa)). Positions 7-16 (ANRRPRRVSR) are enriched in basic residues. Low complexity predominate over residues 17–27 (PRPVQQQQQQP). Residues 28–68 (PQQPPPQPPQQQPPQQQPPPPPQQQQQQQPPPPPPPPPPLP) show a composition bias toward pro residues. Polar residues predominate over residues 114–129 (PTKNSMEGASTSTTEN). In terms of domain architecture, F-box spans 153 to 199 (QYLQEKLPDEVVLKIFSYLLEQDLCRAACVCKRFSELANDPILWKRL). 19 PbH1 repeats span residues 395-417 (GACP…YITD), 418-440 (HAQG…WVKN), 441-463 (HGNP…FTFD), 464-486 (HGMG…EVKA), 487-509 (YANP…YVHE), 510-532 (KGRG…WITS), 533-555 (NSDP…YIFG), 556-578 (DGRG…QIRT), 579-601 (NSCP…YVHE), 602-624 (KGQG…WVTT), 625-647 (GSTP…YFYD), 648-670 (NGHG…QIRT), 671-693 (GSNP…LVYN), 694-716 (SGLG…WIKT), 717-739 (DSNP…CIFN), 740-762 (GGRG…LIST), 763-785 (NSHP…EITN), 786-808 (HATA…FLAS), and 809-830 (GVNV…EKAV). The UBR-type zinc-finger motif lies at 833-904 (GQCLYKISSY…LSNPCTLAGE (72 aa)).

In terms of assembly, component of the SCF(FBXO11) complex consisting of CUL1, RBX1, SKP1 and FBXO11. Interacts with CIITA. As to expression, isoform 5 is expressed in keratinocytes, fibroblasts and melanocytes.

The protein resides in the nucleus. Its subcellular location is the chromosome. Its pathway is protein modification; protein ubiquitination. Its function is as follows. Substrate recognition component of a SCF (SKP1-CUL1-F-box protein) E3 ubiquitin-protein ligase complex which mediates the ubiquitination and subsequent proteasomal degradation of target proteins, such as DTL/CDT2, BCL6, SNAI1 and PRDM1/BLIMP1. The SCF(FBXO11) complex mediates ubiquitination and degradation of BCL6, thereby playing a role in the germinal center B-cells terminal differentiation toward memory B-cells and plasma cells. The SCF(FBXO11) complex also mediates ubiquitination and degradation of DTL, an important step for the regulation of TGF-beta signaling, cell migration and the timing of the cell-cycle progression and exit. The SCF(FBXO11) complex also catalyzes ubiquitination and degradation of GSK3B-phosphorylated SNAI1. Binds to and neddylates phosphorylated p53/TP53, inhibiting its transcriptional activity. Plays a role in the regulatiom of erythropoiesis but not myelopoiesis or megakaryopoiesis. Mechanistically, activates erythroid genes by mediating the degradation of BAHD1, a heterochromatin-associated protein that recruits corepressors to H3K27me3 marks. Participates in macrophage cell death and inflammation in response to bacterial toxins by regulating the expression of complement 5a receptor 1/C5AR1 and IL-1beta. Acts as a critical regulator to determine the level of MHC-II by mediating the recognition of degron at the P/S/T domain of CIITA leading to its ubiquitination and subsequent degradation via the proteasome. Participates in the antiviral repsonse by initiating the activation of TBK1-IRF3-IFN-I axis. Mediates the 'Lys-63'-linked ubiquitination of TRAF3 to strengthen the interaction between TRAF3 and TBK1. The polypeptide is F-box only protein 11 (Homo sapiens (Human)).